Reading from the N-terminus, the 224-residue chain is Urease accessory protein UreF (224 aa).

This sequence belongs to the UreF family. UreD, UreF and UreG form a complex that acts as a GTP-hydrolysis-dependent molecular chaperone, activating the urease apoprotein by helping to assemble the nickel containing metallocenter of UreC. The UreE protein probably delivers the nickel.

The protein localises to the cytoplasm. Required for maturation of urease via the functional incorporation of the urease nickel metallocenter. The polypeptide is Urease accessory protein UreF (Pseudomonas entomophila (strain L48)).